The following is a 169-amino-acid chain: Peptide deformylase (169 aa).

Residues cysteine 94 and histidine 136 each coordinate Fe cation. The active site involves glutamate 137. Histidine 140 is a binding site for Fe cation.

Belongs to the polypeptide deformylase family. Fe(2+) is required as a cofactor.

The catalysed reaction is N-terminal N-formyl-L-methionyl-[peptide] + H2O = N-terminal L-methionyl-[peptide] + formate. Its function is as follows. Removes the formyl group from the N-terminal Met of newly synthesized proteins. Requires at least a dipeptide for an efficient rate of reaction. N-terminal L-methionine is a prerequisite for activity but the enzyme has broad specificity at other positions. The chain is Peptide deformylase from Phenylobacterium zucineum (strain HLK1).